The chain runs to 219 residues: Large ribosomal subunit protein uL3 (219 aa).

Disordered stretches follow at residues 62–81 and 136–156; these read DSRSSKYANKPAEGHAKKAG and QARGPMSHGSHFHRAPGSVGM.

It belongs to the universal ribosomal protein uL3 family. In terms of assembly, part of the 50S ribosomal subunit. Forms a cluster with proteins L14 and L19.

Its function is as follows. One of the primary rRNA binding proteins, it binds directly near the 3'-end of the 23S rRNA, where it nucleates assembly of the 50S subunit. The protein is Large ribosomal subunit protein uL3 of Staphylococcus saprophyticus subsp. saprophyticus (strain ATCC 15305 / DSM 20229 / NCIMB 8711 / NCTC 7292 / S-41).